Consider the following 131-residue polypeptide: Large ribosomal subunit protein bL12 (131 aa).

The protein belongs to the bacterial ribosomal protein bL12 family. In terms of assembly, homodimer. Part of the ribosomal stalk of the 50S ribosomal subunit. Forms a multimeric L10(L12)X complex, where L10 forms an elongated spine to which 2 to 4 L12 dimers bind in a sequential fashion. Binds GTP-bound translation factors.

Functionally, forms part of the ribosomal stalk which helps the ribosome interact with GTP-bound translation factors. Is thus essential for accurate translation. This is Large ribosomal subunit protein bL12 from Prochlorococcus marinus (strain NATL2A).